The primary structure comprises 241 residues: 3-deoxy-manno-octulosonate cytidylyltransferase (241 aa).

It belongs to the KdsB family.

It is found in the cytoplasm. The enzyme catalyses 3-deoxy-alpha-D-manno-oct-2-ulosonate + CTP = CMP-3-deoxy-beta-D-manno-octulosonate + diphosphate. The protein operates within nucleotide-sugar biosynthesis; CMP-3-deoxy-D-manno-octulosonate biosynthesis; CMP-3-deoxy-D-manno-octulosonate from 3-deoxy-D-manno-octulosonate and CTP: step 1/1. Its pathway is bacterial outer membrane biogenesis; lipopolysaccharide biosynthesis. Functionally, activates KDO (a required 8-carbon sugar) for incorporation into bacterial lipopolysaccharide in Gram-negative bacteria. The protein is 3-deoxy-manno-octulosonate cytidylyltransferase of Rickettsia rickettsii (strain Sheila Smith).